Consider the following 626-residue polypeptide: Polyphenol oxidase C, chloroplastic (626 aa).

The N-terminal 83 residues, Met-1–Ala-83, are a transit peptide targeting the chloroplast. Cystine bridges form between Cys-94–Cys-110 and Cys-109–Cys-177. Cu cation-binding residues include His-176, His-194, His-203, His-324, His-328, and His-366. Positions Cys-180–His-194 form a cross-link, 2'-(S-cysteinyl)-histidine (Cys-His).

The protein belongs to the tyrosinase family. Cu(2+) is required as a cofactor.

The protein resides in the plastid. It is found in the chloroplast thylakoid lumen. It carries out the reaction 2 catechol + O2 = 2 1,2-benzoquinone + 2 H2O. Functionally, catalyzes the oxidation of mono- and o-diphenols to o-diquinones. This chain is Polyphenol oxidase C, chloroplastic, found in Solanum lycopersicum (Tomato).